A 312-amino-acid chain; its full sequence is Protoheme IX farnesyltransferase (312 aa).

The next 9 membrane-spanning stretches (helical) occupy residues 29 to 49, 50 to 70, 90 to 110, 117 to 137, 150 to 170, 177 to 197, 223 to 243, 248 to 268, and 292 to 312; these read VMSL…GHMN, PVLA…SGAL, IPAG…LSAF, LMVN…YAVV, IVIG…AATG, VVLF…LSLF, ALFY…LGFA, GAIS…MWVA, and LFAV…FGGF.

This sequence belongs to the UbiA prenyltransferase family. Protoheme IX farnesyltransferase subfamily.

It localises to the cell inner membrane. It catalyses the reaction heme b + (2E,6E)-farnesyl diphosphate + H2O = Fe(II)-heme o + diphosphate. The protein operates within porphyrin-containing compound metabolism; heme O biosynthesis; heme O from protoheme: step 1/1. Functionally, converts heme B (protoheme IX) to heme O by substitution of the vinyl group on carbon 2 of heme B porphyrin ring with a hydroxyethyl farnesyl side group. The polypeptide is Protoheme IX farnesyltransferase (Brucella anthropi (strain ATCC 49188 / DSM 6882 / CCUG 24695 / JCM 21032 / LMG 3331 / NBRC 15819 / NCTC 12168 / Alc 37) (Ochrobactrum anthropi)).